Reading from the N-terminus, the 81-residue chain is Small ribosomal subunit protein bS18 (81 aa).

Belongs to the bacterial ribosomal protein bS18 family. Part of the 30S ribosomal subunit. Forms a tight heterodimer with protein bS6.

Its function is as follows. Binds as a heterodimer with protein bS6 to the central domain of the 16S rRNA, where it helps stabilize the platform of the 30S subunit. This is Small ribosomal subunit protein bS18 from Lactococcus lactis subsp. cremoris (strain MG1363).